The chain runs to 1475 residues: Amylopullulanase (1475 aa).

An N-terminal signal peptide occupies residues 1–31; sequence MFKRRALGFLLAFLLVFTAVFGSMPMEFAKA. 10 residues coordinate Ca(2+): D245, N247, D285, D340, N398, D400, N403, D404, G449, and D451. Residues H524 and R627 each coordinate substrate. Catalysis depends on D629, which acts as the Nucleophile. E658 serves as the catalytic Proton donor. Residues 734–735, D794, and R798 contribute to the substrate site; that span reads HD. Fibronectin type-III domains are found at residues 928 to 1019 and 1164 to 1257; these read APQP…PAFP and TPTA…TPDI. Residues 1255-1362 form the CBM20 domain; sequence PDIIPIKVTF…VNDTVQRWRD (108 aa).

This sequence belongs to the glycosyl hydrolase 13 family. Requires Ca(2+) as cofactor.

The enzyme catalyses Endohydrolysis of (1-&gt;4)-alpha-D-glucosidic linkages in polysaccharides containing three or more (1-&gt;4)-alpha-linked D-glucose units.. It carries out the reaction Hydrolysis of (1-&gt;6)-alpha-D-glucosidic linkages in pullulan, amylopectin and glycogen, and in the alpha- and beta-limit dextrins of amylopectin and glycogen.. This is Amylopullulanase (apu) from Thermoanaerobacter thermohydrosulfuricus (Clostridium thermohydrosulfuricum).